Reading from the N-terminus, the 334-residue chain is D-fructose 1,6-bisphosphatase class 2/sedoheptulose 1,7-bisphosphatase (334 aa).

Mn(2+) is bound by residues aspartate 33, glutamate 57, aspartate 85, and glutamate 88. Residues 88 to 90 (EGT), tyrosine 119, 164 to 166 (RAR), and 186 to 188 (DGD) contribute to the substrate site. Glutamate 213 contributes to the Mn(2+) binding site.

The protein belongs to the FBPase class 2 family. As to quaternary structure, homotetramer. The cofactor is Mn(2+).

The enzyme catalyses beta-D-fructose 1,6-bisphosphate + H2O = beta-D-fructose 6-phosphate + phosphate. The catalysed reaction is D-sedoheptulose 1,7-bisphosphate + H2O = D-sedoheptulose 7-phosphate + phosphate. It functions in the pathway carbohydrate biosynthesis; Calvin cycle. Its function is as follows. Catalyzes the hydrolysis of fructose 1,6-bisphosphate (Fru 1,6-P2) and sedoheptulose 1,7-bisphosphate (Sed 1,7-P2) to fructose 6-phosphate and sedoheptulose 7-phosphate, respectively. The protein is D-fructose 1,6-bisphosphatase class 2/sedoheptulose 1,7-bisphosphatase of Prochlorococcus marinus (strain MIT 9303).